The primary structure comprises 438 residues: Prenyltransferase malE (438 aa).

Substrate is bound at residue E92. 7 residues coordinate dimethylallyl diphosphate: R106, K192, Y194, K259, Y261, Y346, and Y411.

Belongs to the tryptophan dimethylallyltransferase family.

The catalysed reaction is (S)-3-(indol-3-ylmethyl)-6,7,8,8a-tetrahydropyrrolo[1,2-a]pyrazin-1-one + dimethylallyl diphosphate = (S)-3-{[2-(1,1-dimethylallyl)-indol-3-yl]methyl}-6,7,8,8a-tetrahydropyrrolo[1,2-a]pyrazin-1-one + diphosphate. It carries out the reaction 1-hydroxy-3-(indol-3-ylmethyl)-6H,7H,8H-5lambda(5)-pyrrolo[1,2-a]pyrazine + dimethylallyl diphosphate = 1-hydroxy-3-{[2-(1,1-dimethylallyl)-indol-3-yl]methyl}-6H,7H,8H-5lambda(5)-pyrrolo[1,2-a]pyrazine + diphosphate. Its pathway is alkaloid biosynthesis. In terms of biological role, prenyltransferase; part of the gene cluster that mediates the biosynthesis of malbrancheamide, a dichlorinated fungal indole alkaloid that belongs to a family of natural products containing a characteristic bicyclo[2.2.2]diazaoctane core. The first step of malbrancheamide biosynthesis involves coupling of L-proline and L-tryptophan by malG, a bimodular NRPS, to produce L-Pro-L-Trp aldehyde through reductive offloading. This compound undergoes spontaneous cyclization and dehydration to give a dienamine which is reverse prenylated at C-2 by malE. The other prenyltransferase present in the cluster, malB, displays modest activity, suggesting that may be a redundant gene in the pathway. Subsequently, a [4+2] Diels-Alder cyclo-addition catalyzed by the bifunctional enzyme malC forms the characteristic bicyclo[2.2.2]diazaoctane ring of premalbrancheamid. Finally, the flavin-dependent halogenase malA catalyzes the iterative dichlorination of the indole ring of premalbrancheamide to yield C-9 monochlorinated malbrancheamide B, C-8 monochlorinated isomalbrancheamide B, and dichlorinated malbrancheamide. MalA is also able to brominate premalbrancheamide at C-9 to yield malbrancheamide C, and, to a lesser extend, at C-8 to yield isomalbrancheamide C. Finally, malA can brominate C-9 monochlorinated malbrancheamide B at C-8 to yield malbrancheamide D, or C-8 monochlorinated isomalbrancheamide B at C-9 to produce isomalbrancheamide D. The sequence is that of Prenyltransferase malE from Malbranchea aurantiaca.